A 299-amino-acid chain; its full sequence is tRNA dimethylallyltransferase (299 aa).

11 to 18 (GPTAVGKT) contacts ATP. 13–18 (TAVGKT) serves as a coordination point for substrate. The segment at 36 to 39 (DSQQ) is interaction with substrate tRNA.

This sequence belongs to the IPP transferase family. As to quaternary structure, monomer. The cofactor is Mg(2+).

The enzyme catalyses adenosine(37) in tRNA + dimethylallyl diphosphate = N(6)-dimethylallyladenosine(37) in tRNA + diphosphate. Catalyzes the transfer of a dimethylallyl group onto the adenine at position 37 in tRNAs that read codons beginning with uridine, leading to the formation of N6-(dimethylallyl)adenosine (i(6)A). The chain is tRNA dimethylallyltransferase from Streptococcus pyogenes serotype M1.